We begin with the raw amino-acid sequence, 729 residues long: Fatty acid oxidation complex subunit alpha (729 aa).

The segment at 1–189 (MLYKGDTLYL…KIGLVDGVVK (189 aa)) is enoyl-CoA hydratase/isomerase. A substrate-binding site is contributed by Asp-296. The segment at 311 to 729 (ETPKQAAVLG…ARPVGSLKTA (419 aa)) is 3-hydroxyacyl-CoA dehydrogenase. Residues Met-324, Asp-343, 400 to 402 (VVE), Lys-407, and Ser-429 contribute to the NAD(+) site. His-450 functions as the For 3-hydroxyacyl-CoA dehydrogenase activity in the catalytic mechanism. Asn-453 provides a ligand contact to NAD(+). The substrate site is built by Asn-500 and Tyr-660. The tract at residues 708–729 (RHNEPYYPPVEPARPVGSLKTA) is disordered.

This sequence in the N-terminal section; belongs to the enoyl-CoA hydratase/isomerase family. The protein in the C-terminal section; belongs to the 3-hydroxyacyl-CoA dehydrogenase family. Heterotetramer of two alpha chains (FadB) and two beta chains (FadA).

The enzyme catalyses a (3S)-3-hydroxyacyl-CoA + NAD(+) = a 3-oxoacyl-CoA + NADH + H(+). It catalyses the reaction a (3S)-3-hydroxyacyl-CoA = a (2E)-enoyl-CoA + H2O. The catalysed reaction is a 4-saturated-(3S)-3-hydroxyacyl-CoA = a (3E)-enoyl-CoA + H2O. It carries out the reaction (3S)-3-hydroxybutanoyl-CoA = (3R)-3-hydroxybutanoyl-CoA. The enzyme catalyses a (3Z)-enoyl-CoA = a 4-saturated (2E)-enoyl-CoA. It catalyses the reaction a (3E)-enoyl-CoA = a 4-saturated (2E)-enoyl-CoA. The protein operates within lipid metabolism; fatty acid beta-oxidation. Functionally, involved in the aerobic and anaerobic degradation of long-chain fatty acids via beta-oxidation cycle. Catalyzes the formation of 3-oxoacyl-CoA from enoyl-CoA via L-3-hydroxyacyl-CoA. It can also use D-3-hydroxyacyl-CoA and cis-3-enoyl-CoA as substrate. This Salmonella enteritidis PT4 (strain P125109) protein is Fatty acid oxidation complex subunit alpha.